A 128-amino-acid chain; its full sequence is Glycine cleavage system H protein (128 aa).

Positions 23–105 (KVRIGITDFA…YEKAWMIVVE (83 aa)) constitute a Lipoyl-binding domain. K64 is modified (N6-lipoyllysine).

This sequence belongs to the GcvH family. The glycine cleavage system is composed of four proteins: P, T, L and H. (R)-lipoate serves as cofactor.

The glycine cleavage system catalyzes the degradation of glycine. The H protein shuttles the methylamine group of glycine from the P protein to the T protein. In terms of biological role, is also involved in protein lipoylation via its role as an octanoyl/lipoyl carrier protein intermediate. This Halalkalibacterium halodurans (strain ATCC BAA-125 / DSM 18197 / FERM 7344 / JCM 9153 / C-125) (Bacillus halodurans) protein is Glycine cleavage system H protein.